Reading from the N-terminus, the 429-residue chain is Ribosomal protein uS12 methylthiotransferase RimO (429 aa).

One can recognise an MTTase N-terminal domain in the interval 2–118 (HNIFLLSLGC…VLRAIGAEYR (117 aa)). Positions 11, 47, 81, 142, 146, and 149 each coordinate [4Fe-4S] cluster. The region spanning 128–357 (LTPPHYAFLK…MELQETISQE (230 aa)) is the Radical SAM core domain. Residues 360–427 (REFEGNEIVV…PYDLEGEVIG (68 aa)) enclose the TRAM domain.

This sequence belongs to the methylthiotransferase family. RimO subfamily. It depends on [4Fe-4S] cluster as a cofactor.

The protein resides in the cytoplasm. It carries out the reaction L-aspartate(89)-[ribosomal protein uS12]-hydrogen + (sulfur carrier)-SH + AH2 + 2 S-adenosyl-L-methionine = 3-methylsulfanyl-L-aspartate(89)-[ribosomal protein uS12]-hydrogen + (sulfur carrier)-H + 5'-deoxyadenosine + L-methionine + A + S-adenosyl-L-homocysteine + 2 H(+). Catalyzes the methylthiolation of an aspartic acid residue of ribosomal protein uS12. This is Ribosomal protein uS12 methylthiotransferase RimO from Chlorobium limicola (strain DSM 245 / NBRC 103803 / 6330).